Consider the following 404-residue polypeptide: RNA exonuclease 3 (404 aa).

Over residues 1 to 17 the composition is skewed to polar residues; sequence MNNNAQNKRSLDDSNGN. A disordered region spans residues 1–29; sequence MNNNAQNKRSLDDSNGNDTKRPKQEDPKY. Residues 18 to 28 show a composition bias toward basic and acidic residues; the sequence is DTKRPKQEDPK. The region spanning 241-389 is the Exonuclease domain; it reads VLGIDCEMGF…EDSIAAIDIV (149 aa).

Belongs to the REXO1/REXO3 family.

Its subcellular location is the cytoplasm. The protein resides in the nucleus. Functionally, 3' to 5' exoribonuclease required for proper 3' end maturation of MRP RNA and of the U5L snRNA. The chain is RNA exonuclease 3 (REX3) from Candida albicans (strain SC5314 / ATCC MYA-2876) (Yeast).